The sequence spans 353 residues: MSSAANLPSPSPSPPIRTDVLIVGAGPVGLFAAFEAGVIGLSCQIVDGLDKVGGQCIELYPDKPIYDIPAIPSCTARELVERLLAQCRPFDPPIHLEQRVESVEQGGDGRWTVRTDRGLVFDVAAILLAAGNGAFVPQKLALAEAVPLESRHVHYSVPRLADFAGKTVVVAGGGDSALDWALALRKVARRVTLVHRRSGFSAADSSVESMRRAVEAGEMDFVVGAIAGLDVEDDALKSITLRHIEGETQLAAEHLVALYGLVADLGPIAQWGLSIHGGRVDVDTSNYESSRPGIFAVGDIAHYPNKQKLILSGFHEASLALRKAYSYAYPEKKRVHVHSSYDAKLAEKVSAAG.

7 residues coordinate FAD: Asp47, Gln55, Tyr60, Val100, Phe135, Asp299, and Ser340.

This sequence belongs to the ferredoxin--NADP reductase type 2 family. Homodimer. It depends on FAD as a cofactor.

It catalyses the reaction 2 reduced [2Fe-2S]-[ferredoxin] + NADP(+) + H(+) = 2 oxidized [2Fe-2S]-[ferredoxin] + NADPH. This is Ferredoxin--NADP reductase from Paraburkholderia xenovorans (strain LB400).